A 554-amino-acid polypeptide reads, in one-letter code: 4-coumarate--CoA ligase 3 (554 aa).

The ATP site is built by S188, S189, G190, T191, T192, and K196. The (E)-4-coumaroyl-AMP site is built by Y238 and S242. CoA is bound at residue K259. Residues 261–330 (DLGALVDLVR…AKIPNAVLGQ (70 aa)) are SBD1. Residues A308, Q330, G331, T335, and M343 each coordinate (E)-4-coumaroyl-AMP. Residues Q330, G331, and T335 each contribute to the ATP site. Residues 331–398 (GYGMTEAGPV…IRGEQIMKGY (68 aa)) are SBD2. ATP-binding residues include D419 and R434. (E)-4-coumaroyl-AMP-binding residues include K436 and K440. The CoA site is built by K442 and G443. K525 contributes to the ATP binding site.

Belongs to the ATP-dependent AMP-binding enzyme family. It depends on Mg(2+) as a cofactor. Expressed in root exodermis and epidermis cells, stem vascular cells, leaf developing vascular bundle cells and parenchyma cells, lemma, palea, stamens and pistil.

The enzyme catalyses (E)-ferulate + ATP + CoA = (E)-feruloyl-CoA + AMP + diphosphate. It carries out the reaction (E)-4-coumarate + ATP + CoA = (E)-4-coumaroyl-CoA + AMP + diphosphate. It catalyses the reaction (E)-caffeate + ATP + CoA = (E)-caffeoyl-CoA + AMP + diphosphate. The catalysed reaction is (E)-cinnamate + ATP + CoA = (E)-cinnamoyl-CoA + AMP + diphosphate. The enzyme catalyses (E)-ferulate + ATP + H(+) = (E)-feruloyl-AMP + diphosphate. It carries out the reaction (E)-feruloyl-AMP + CoA = (E)-feruloyl-CoA + AMP + H(+). It catalyses the reaction (E)-4-coumarate + ATP + H(+) = (E)-4-coumaroyl-AMP + diphosphate. The catalysed reaction is (E)-4-coumaroyl-AMP + CoA = (E)-4-coumaroyl-CoA + AMP + H(+). The enzyme catalyses (E)-caffeate + ATP + H(+) = (E)-caffeoyl-AMP + diphosphate. It carries out the reaction (E)-caffeoyl-AMP + CoA = (E)-caffeoyl-CoA + AMP + H(+). The protein operates within phytoalexin biosynthesis; 3,4',5-trihydroxystilbene biosynthesis; 3,4',5-trihydroxystilbene from trans-4-coumarate: step 1/2. Involved in the phenylpropanoid metabolism by mediating the activation of a number of hydroxycinnamates for the biosynthesis of monolignols and other phenolic secondary metabolites. Catalyzes the formation of CoA esters of cinnamate, 4-coumarate, caffeate and ferulate. Is more efficient with substrates in the following order: ferulate &gt; 4-coumarate &gt; caffeate &gt; cinnamate. Possesses very high activity compared to 4CL1, 4CL2, 4CL4 and 4CL5. Cannot convert sinapate to its corresponding CoA ester. May play a role in the synthesis of lignin as well as other phenolic compounds. Follows a two-step reaction mechanism, wherein the carboxylate substrate first undergoes adenylation by ATP, followed by a thioesterification in the presence of CoA to yield the final CoA thioester. The sequence is that of 4-coumarate--CoA ligase 3 from Oryza sativa subsp. japonica (Rice).